A 499-amino-acid polypeptide reads, in one-letter code: Leukocyte immunoglobulin-like receptor subfamily A member 4 (499 aa).

The N-terminal stretch at 1-23 (MTLILTSLLFFGLSLGPRTRVQA) is a signal peptide. Ig-like C2-type domains follow at residues 24 to 118 (ENLL…LVVT), 123 to 213 (PTLS…SDPL), 224 to 313 (PSLL…DPLD), and 324 to 413 (PSLS…SEPL). Topologically, residues 24 to 446 (ENLLKPILWA…PHLQDYTVEN (423 aa)) are extracellular. C49 and C98 form a disulfide bridge. The N-linked (GlcNAc...) asparagine glycan is linked to N138. C143 and C195 are joined by a disulfide. Residues N239, N279, and N300 are each glycosylated (N-linked (GlcNAc...) asparagine). Residues C244 and C295 are joined by a disulfide bond. Cysteines 344 and 395 form a disulfide. Position 404 is a 3'-nitrotyrosine (Y404). A helical membrane pass occupies residues 447–467 (LIRMGVAGLVLLFLGILLFEA). Over 468–499 (QHSQRSPPRCSQEANSRKDNAPFRVVEPWEQI) the chain is Cytoplasmic.

In terms of assembly, interacts with FCER1G; this stabilizes the expression of both proteins at the cell membrane. Interacts with BST2; leads to activation of LILRA4-mediated signaling and down-regulation of the innate immune response to viral pathogens. Detected on plasmacytoid dendritic cells (at protein level). Detected on plasmacytoid dendritic cells, but not on monocytes or B cells.

It is found in the cell membrane. Functionally, functions coreceptor to limit the innate immune responses to viral infections; signaling occurs via FCER1G. Down-regulates the production of IFNA1, IFNA2, IFNA4, IFNB1 and TNF by plasmacytoid dendritic cells that have been exposed to influenza virus or cytidine-phosphate-guanosine (CpG) dinucleotides, indicating it functions as a negative regulator of TLR7 and TLR9 signaling cascades. Down-regulates interferon production in response to interaction with BST2 on HIV-1 infected cells. Activates a signaling cascade in complex with FCER1G that results in phosphorylation of Src family and Syk kinases and thereby triggers mobilization of intracellular Ca(2+). Does not interfere with the differentiation of plasmacytoid dendritic cells into antigen-presenting cells. In Homo sapiens (Human), this protein is Leukocyte immunoglobulin-like receptor subfamily A member 4.